A 632-amino-acid polypeptide reads, in one-letter code: DNA polymerase eta (632 aa).

A UmuC domain is found at 26–309 (IAHIDMNAFF…FEITSFWTLG (284 aa)). Positions 30 and 155 each coordinate Mg(2+). The segment at 545–580 (EKTPKLECCKYQVTFTDQKALQEHADYHLALKLSEG) adopts a UBZ3-type zinc-finger fold. Zn(2+) contacts are provided by Cys552, Cys553, His568, and His572. The interval 598-632 (LLFSRKRPNSQHTATPQKKQVTSSKNILSFFTRKK) is disordered. A compositionally biased stretch (polar residues) spans 607–626 (SQHTATPQKKQVTSSKNILS). Positions 625 to 632 (LSFFTRKK) are POL30-binding.

The protein belongs to the DNA polymerase type-Y family. Interacts with POL30. This interaction is essential for the polymerase eta function.

It localises to the nucleus. The enzyme catalyses DNA(n) + a 2'-deoxyribonucleoside 5'-triphosphate = DNA(n+1) + diphosphate. In terms of biological role, DNA polymerase specifically involved in DNA repair. Plays an important role in translesion synthesis, where the normal high fidelity DNA polymerases cannot proceed and DNA synthesis stalls. Plays an important role in the repair of UV-induced pyrimidine dimers. Depending on the context, it inserts the correct base, but causes frequent base transitions and transversions. Efficiently incorporates nucleotides opposite to other UV or oxidative DNA damages like O(6)-methylguanine, 7,8-dihydro-8-oxoguanine, 2,6-diamino-4-hydroxy-5-formamidopyrimidine of 2'-deoxyguanosine (FaPydG), or p-benzoquinone DNA adducts. This chain is DNA polymerase eta (RAD30), found in Saccharomyces cerevisiae (strain ATCC 204508 / S288c) (Baker's yeast).